A 237-amino-acid polypeptide reads, in one-letter code: 2-C-methyl-D-erythritol 4-phosphate cytidylyltransferase (237 aa).

This sequence belongs to the IspD/TarI cytidylyltransferase family. IspD subfamily.

The enzyme catalyses 2-C-methyl-D-erythritol 4-phosphate + CTP + H(+) = 4-CDP-2-C-methyl-D-erythritol + diphosphate. It functions in the pathway isoprenoid biosynthesis; isopentenyl diphosphate biosynthesis via DXP pathway; isopentenyl diphosphate from 1-deoxy-D-xylulose 5-phosphate: step 2/6. Catalyzes the formation of 4-diphosphocytidyl-2-C-methyl-D-erythritol from CTP and 2-C-methyl-D-erythritol 4-phosphate (MEP). The polypeptide is 2-C-methyl-D-erythritol 4-phosphate cytidylyltransferase (Acidithiobacillus ferrooxidans (strain ATCC 23270 / DSM 14882 / CIP 104768 / NCIMB 8455) (Ferrobacillus ferrooxidans (strain ATCC 23270))).